The primary structure comprises 166 residues: NADPH-dependent 7-cyano-7-deazaguanine reductase (166 aa).

Catalysis depends on C57, which acts as the Thioimide intermediate. D64 acts as the Proton donor in catalysis. Substrate is bound by residues 79–81 and 98–99; these read VES and HE.

Belongs to the GTP cyclohydrolase I family. QueF type 1 subfamily.

It is found in the cytoplasm. The catalysed reaction is 7-aminomethyl-7-carbaguanine + 2 NADP(+) = 7-cyano-7-deazaguanine + 2 NADPH + 3 H(+). It participates in tRNA modification; tRNA-queuosine biosynthesis. Catalyzes the NADPH-dependent reduction of 7-cyano-7-deazaguanine (preQ0) to 7-aminomethyl-7-deazaguanine (preQ1). This is NADPH-dependent 7-cyano-7-deazaguanine reductase from Staphylococcus epidermidis (strain ATCC 35984 / DSM 28319 / BCRC 17069 / CCUG 31568 / BM 3577 / RP62A).